Consider the following 155-residue polypeptide: Small ribosomal subunit protein uS7c (155 aa).

Belongs to the universal ribosomal protein uS7 family. As to quaternary structure, part of the 30S ribosomal subunit.

It is found in the plastid. Its subcellular location is the chloroplast. Functionally, one of the primary rRNA binding proteins, it binds directly to 16S rRNA where it nucleates assembly of the head domain of the 30S subunit. The protein is Small ribosomal subunit protein uS7c (rps7) of Cornus mas (Cornelian cherry dogwood).